A 269-amino-acid chain; its full sequence is 3-methyl-2-oxobutanoate hydroxymethyltransferase (269 aa).

The Mg(2+) site is built by Asp-48 and Asp-87. Residues 48–49, Asp-87, and Lys-117 contribute to the 3-methyl-2-oxobutanoate site; that span reads DS. Residue Glu-119 participates in Mg(2+) binding. The active-site Proton acceptor is the Glu-186.

It belongs to the PanB family. Homodecamer; pentamer of dimers. Requires Mg(2+) as cofactor.

It localises to the cytoplasm. The enzyme catalyses 3-methyl-2-oxobutanoate + (6R)-5,10-methylene-5,6,7,8-tetrahydrofolate + H2O = 2-dehydropantoate + (6S)-5,6,7,8-tetrahydrofolate. Its pathway is cofactor biosynthesis; (R)-pantothenate biosynthesis; (R)-pantoate from 3-methyl-2-oxobutanoate: step 1/2. Its function is as follows. Catalyzes the reversible reaction in which hydroxymethyl group from 5,10-methylenetetrahydrofolate is transferred onto alpha-ketoisovalerate to form ketopantoate. This Moorella thermoacetica (strain ATCC 39073 / JCM 9320) protein is 3-methyl-2-oxobutanoate hydroxymethyltransferase.